We begin with the raw amino-acid sequence, 328 residues long: Fe(3+) ions import ATP-binding protein FbpC 1 (328 aa).

The ABC transporter domain maps to 7–237 (LVLKNITKAF…PNSLFLANFM (231 aa)). Residue 39 to 46 (GPSGCGKT) participates in ATP binding.

The protein belongs to the ABC transporter superfamily. Fe(3+) ion importer (TC 3.A.1.10) family. As to quaternary structure, the complex is composed of two ATP-binding proteins (FbpC), two transmembrane proteins (FbpB) and a solute-binding protein (FbpA).

It localises to the cell inner membrane. It carries out the reaction Fe(3+)(out) + ATP + H2O = Fe(3+)(in) + ADP + phosphate + H(+). Its function is as follows. Part of the ABC transporter complex FbpABC involved in Fe(3+) ions import. Responsible for energy coupling to the transport system. This is Fe(3+) ions import ATP-binding protein FbpC 1 from Haemophilus influenzae (strain ATCC 51907 / DSM 11121 / KW20 / Rd).